Here is a 451-residue protein sequence, read N- to C-terminus: Bifunctional protein GlmU (451 aa).

Residues 1–225 (MLEIIILAAG…EYEVLGVNNR (225 aa)) form a pyrophosphorylase region. Residues 7–10 (LAAG), Lys21, Gln72, 77–78 (GT), 99–101 (YGD), Gly136, Glu150, Asn165, and Asn223 contribute to the UDP-N-acetyl-alpha-D-glucosamine site. Mg(2+) is bound at residue Asp101. Asn223 lines the Mg(2+) pocket. The segment at 226–246 (LQQAELERIFQRQVAEELMVA) is linker. The N-acetyltransferase stretch occupies residues 247 to 451 (GATLLDPARL…IKGWARPVKK (205 aa)). Arg329 and Lys347 together coordinate UDP-N-acetyl-alpha-D-glucosamine. His359 (proton acceptor) is an active-site residue. Tyr362 and Asn373 together coordinate UDP-N-acetyl-alpha-D-glucosamine. Residues Ala376, 382 to 383 (NY), Ser401, Ala419, and Arg436 each bind acetyl-CoA.

In the N-terminal section; belongs to the N-acetylglucosamine-1-phosphate uridyltransferase family. The protein in the C-terminal section; belongs to the transferase hexapeptide repeat family. As to quaternary structure, homotrimer. Requires Mg(2+) as cofactor.

Its subcellular location is the cytoplasm. The catalysed reaction is alpha-D-glucosamine 1-phosphate + acetyl-CoA = N-acetyl-alpha-D-glucosamine 1-phosphate + CoA + H(+). It catalyses the reaction N-acetyl-alpha-D-glucosamine 1-phosphate + UTP + H(+) = UDP-N-acetyl-alpha-D-glucosamine + diphosphate. Its pathway is nucleotide-sugar biosynthesis; UDP-N-acetyl-alpha-D-glucosamine biosynthesis; N-acetyl-alpha-D-glucosamine 1-phosphate from alpha-D-glucosamine 6-phosphate (route II): step 2/2. The protein operates within nucleotide-sugar biosynthesis; UDP-N-acetyl-alpha-D-glucosamine biosynthesis; UDP-N-acetyl-alpha-D-glucosamine from N-acetyl-alpha-D-glucosamine 1-phosphate: step 1/1. It functions in the pathway bacterial outer membrane biogenesis; LPS lipid A biosynthesis. In terms of biological role, catalyzes the last two sequential reactions in the de novo biosynthetic pathway for UDP-N-acetylglucosamine (UDP-GlcNAc). The C-terminal domain catalyzes the transfer of acetyl group from acetyl coenzyme A to glucosamine-1-phosphate (GlcN-1-P) to produce N-acetylglucosamine-1-phosphate (GlcNAc-1-P), which is converted into UDP-GlcNAc by the transfer of uridine 5-monophosphate (from uridine 5-triphosphate), a reaction catalyzed by the N-terminal domain. This is Bifunctional protein GlmU from Saccharophagus degradans (strain 2-40 / ATCC 43961 / DSM 17024).